A 363-amino-acid polypeptide reads, in one-letter code: DNA replication and repair protein RecF (363 aa).

ATP is bound at residue 30–37 (GPNGSGKT).

It belongs to the RecF family.

Its subcellular location is the cytoplasm. Its function is as follows. The RecF protein is involved in DNA metabolism; it is required for DNA replication and normal SOS inducibility. RecF binds preferentially to single-stranded, linear DNA. It also seems to bind ATP. The protein is DNA replication and repair protein RecF of Chlorobium phaeobacteroides (strain BS1).